We begin with the raw amino-acid sequence, 72 residues long: Exodeoxyribonuclease 7 small subunit (72 aa).

This sequence belongs to the XseB family. Heterooligomer composed of large and small subunits.

The protein resides in the cytoplasm. The catalysed reaction is Exonucleolytic cleavage in either 5'- to 3'- or 3'- to 5'-direction to yield nucleoside 5'-phosphates.. Functionally, bidirectionally degrades single-stranded DNA into large acid-insoluble oligonucleotides, which are then degraded further into small acid-soluble oligonucleotides. The chain is Exodeoxyribonuclease 7 small subunit from Ruegeria pomeroyi (strain ATCC 700808 / DSM 15171 / DSS-3) (Silicibacter pomeroyi).